The chain runs to 298 residues: tRNA pseudouridine synthase B (298 aa).

Aspartate 44 (nucleophile) is an active-site residue.

This sequence belongs to the pseudouridine synthase TruB family. Type 1 subfamily.

It catalyses the reaction uridine(55) in tRNA = pseudouridine(55) in tRNA. In terms of biological role, responsible for synthesis of pseudouridine from uracil-55 in the psi GC loop of transfer RNAs. The chain is tRNA pseudouridine synthase B from Mycobacteroides abscessus (strain ATCC 19977 / DSM 44196 / CCUG 20993 / CIP 104536 / JCM 13569 / NCTC 13031 / TMC 1543 / L948) (Mycobacterium abscessus).